Here is a 489-residue protein sequence, read N- to C-terminus: Adenylosuccinate synthetase 2, chloroplastic (489 aa).

The N-terminal 45 residues, 1–45, are a transit peptide targeting the chloroplast; the sequence is MPFSPPCLDPAAAAAASLSFLPAAAARPPAPCAVAPRSRRALRVA. GTP contacts are provided by residues 76–82 and 104–106; these read GDEGKGK and GHT. Aspartate 77 serves as the catalytic Proton acceptor. Aspartate 77 and glycine 104 together coordinate Mg(2+). Residues 77 to 80, 102 to 105, threonine 194, arginine 208, glutamine 288, threonine 303, and arginine 367 contribute to the IMP site; these read DEGK and NAGH. The active-site Proton donor is histidine 105. 363–369 contacts substrate; that stretch reads TTTGRPR. Residues arginine 369, 395–397, and 478–480 each bind GTP; these read KLD and GVG.

Belongs to the adenylosuccinate synthetase family. As to quaternary structure, homodimer. Requires Mg(2+) as cofactor.

It localises to the plastid. The protein resides in the chloroplast. The enzyme catalyses IMP + L-aspartate + GTP = N(6)-(1,2-dicarboxyethyl)-AMP + GDP + phosphate + 2 H(+). It participates in purine metabolism; AMP biosynthesis via de novo pathway; AMP from IMP: step 1/2. Functionally, plays an important role in the de novo pathway and in the salvage pathway of purine nucleotide biosynthesis. Catalyzes the first committed step in the biosynthesis of AMP from IMP. The polypeptide is Adenylosuccinate synthetase 2, chloroplastic (Oryza sativa subsp. japonica (Rice)).